The chain runs to 204 residues: Phosphatidylserine decarboxylase proenzyme (204 aa).

Catalysis depends on Ser-169, which acts as the Schiff-base intermediate with substrate; via pyruvic acid. Ser-169 carries the pyruvic acid (Ser); by autocatalysis modification.

It belongs to the phosphatidylserine decarboxylase family. PSD-A subfamily. In terms of assembly, heterodimer of a large membrane-associated beta subunit and a small pyruvoyl-containing alpha subunit. Pyruvate is required as a cofactor. In terms of processing, is synthesized initially as an inactive proenzyme. Formation of the active enzyme involves a self-maturation process in which the active site pyruvoyl group is generated from an internal serine residue via an autocatalytic post-translational modification. Two non-identical subunits are generated from the proenzyme in this reaction, and the pyruvate is formed at the N-terminus of the alpha chain, which is derived from the carboxyl end of the proenzyme. The post-translation cleavage follows an unusual pathway, termed non-hydrolytic serinolysis, in which the side chain hydroxyl group of the serine supplies its oxygen atom to form the C-terminus of the beta chain, while the remainder of the serine residue undergoes an oxidative deamination to produce ammonia and the pyruvoyl prosthetic group on the alpha chain.

The protein resides in the cell membrane. It carries out the reaction a 1,2-diacyl-sn-glycero-3-phospho-L-serine + H(+) = a 1,2-diacyl-sn-glycero-3-phosphoethanolamine + CO2. Its pathway is phospholipid metabolism; phosphatidylethanolamine biosynthesis; phosphatidylethanolamine from CDP-diacylglycerol: step 2/2. In terms of biological role, catalyzes the formation of phosphatidylethanolamine (PtdEtn) from phosphatidylserine (PtdSer). The chain is Phosphatidylserine decarboxylase proenzyme from Solibacter usitatus (strain Ellin6076).